The sequence spans 328 residues: Bcl-2/adenovirus E1B 19 kDa-interacting protein 2-like protein (328 aa).

Over residues 1–22 (MKLGELELREEWQDEEFPRLLP) the composition is skewed to basic and acidic residues. Residues 1 to 116 (MKLGELELRE…DSGHEFEWED (116 aa)) form a disordered region. The segment covering 36-45 (RGSQAGTPSS) has biased composition (polar residues). The span at 76 to 89 (ASPTRSASSSSAGS) shows a compositional bias: low complexity. Residues 92 to 105 (LEVDELETPSDSEQ) are compositionally biased toward acidic residues. Residues 107-116 (DSGHEFEWED) show a composition bias toward basic and acidic residues. The CRAL-TRIO domain maps to 162-323 (DMTIIEPYKK…VVRQLDRDLH (162 aa)).

Homodimer. Interacts with BCL2, ARHGAP1, MIF and GFER.

Functionally, may be a bridge molecule between BCL2 and ARHGAP1/CDC42 in promoting cell death. The polypeptide is Bcl-2/adenovirus E1B 19 kDa-interacting protein 2-like protein (Bnipl) (Mus musculus (Mouse)).